Here is a 274-residue protein sequence, read N- to C-terminus: Large ribosomal subunit protein uL2 (274 aa).

A disordered region spans residues 224 to 274; the sequence is VAMNPVDHPHGGGEGRTSGGRHPVTPWGIPTKGYKTRKNKRSNKLIVQKRK. Residues 257–274 are compositionally biased toward basic residues; it reads YKTRKNKRSNKLIVQKRK.

Belongs to the universal ribosomal protein uL2 family. In terms of assembly, part of the 50S ribosomal subunit. Forms a bridge to the 30S subunit in the 70S ribosome.

One of the primary rRNA binding proteins. Required for association of the 30S and 50S subunits to form the 70S ribosome, for tRNA binding and peptide bond formation. It has been suggested to have peptidyltransferase activity; this is somewhat controversial. Makes several contacts with the 16S rRNA in the 70S ribosome. The protein is Large ribosomal subunit protein uL2 of Francisella philomiragia subsp. philomiragia (strain ATCC 25017 / CCUG 19701 / FSC 153 / O#319-036).